A 161-amino-acid chain; its full sequence is Globin CTT-IX (161 aa).

Residues 1–16 (MKFFIVLALCIVGAIA) form the signal peptide. The 144-residue stretch at 18–161 (PVSSDQANAI…NIFGMIFAHL (144 aa)) folds into the Globin domain. Heme b is bound by residues His-76 and His-111.

This sequence belongs to the globin family. In terms of assembly, homodimer.

The sequence is that of Globin CTT-IX (CTT-9) from Chironomus thummi thummi (Midge).